The chain runs to 101 residues: MDPVDPKLEPWNHPGSQPTTPCNKCYCKVCCWHCQVCFLNKGLGISYGRKKRRPRRGTPQGSKDHQNPVPKQPLPITSGNPTGSEKPKKEVASKTETDPLD.

The interaction with human CREBBP stretch occupies residues 1 to 24 (MDPVDPKLEPWNHPGSQPTTPCNK). The interval 1 to 48 (MDPVDPKLEPWNHPGSQPTTPCNKCYCKVCCWHCQVCFLNKGLGISYG) is transactivation. C22, C25, and C27 together coordinate Zn(2+). The cysteine-rich stretch occupies residues 22–37 (CNKCYCKVCCWHCQVC). Position 28 is an N6-acetyllysine; by host PCAF (K28). Positions 30, 33, 34, and 37 each coordinate Zn(2+). A core region spans residues 38–48 (FLNKGLGISYG). The segment at 48-101 (GRKKRRPRRGTPQGSKDHQNPVPKQPLPITSGNPTGSEKPKKEVASKTETDPLD) is disordered. The Nuclear localization signal, RNA-binding (TAR), and protein transduction signature appears at 49–57 (RKKRRPRRG). The interval 49–86 (RKKRRPRRGTPQGSKDHQNPVPKQPLPITSGNPTGSEK) is interaction with the host capping enzyme RNGTT. Residues K50 and K51 each carry the N6-acetyllysine; by host EP300 and GCN5L2 modification. Asymmetric dimethylarginine; by host PRMT6 occurs at positions 52 and 53. K71 is covalently cross-linked (Glycyl lysine isopeptide (Lys-Gly) (interchain with G-Cter in ubiquitin)). The segment covering 85 to 101 (EKPKKEVASKTETDPLD) has biased composition (basic and acidic residues).

The protein belongs to the lentiviruses Tat family. As to quaternary structure, interacts with host CCNT1. Associates with the P-TEFb complex composed at least of Tat, P-TEFb (CDK9 and CCNT1), TAR RNA, RNA Pol II. Recruits the HATs CREBBP, TAF1/TFIID, EP300, PCAF and GCN5L2. Interacts with host KAT5/Tip60; this interaction targets the latter to degradation. Interacts with the host deacetylase SIRT1. Interacts with host capping enzyme RNGTT; this interaction stimulates RNGTT. Binds to host KDR, and to the host integrins ITGAV/ITGB3 and ITGA5/ITGB1. Interacts with host KPNB1/importin beta-1 without previous binding to KPNA1/importin alpha-1. Interacts with EIF2AK2. Interacts with host nucleosome assembly protein NAP1L1; this interaction may be required for the transport of Tat within the nucleus, since the two proteins interact at the nuclear rim. Interacts with host C1QBP/SF2P32; this interaction involves lysine-acetylated Tat. Interacts with the host chemokine receptors CCR2, CCR3 and CXCR4. Interacts with host DPP4/CD26; this interaction may trigger an anti-proliferative effect. Interacts with host LDLR. Interacts with the host extracellular matrix metalloproteinase MMP1. Interacts with host PRMT6; this interaction mediates Tat's methylation. Interacts with, and is ubiquitinated by MDM2/Hdm2. Interacts with host PSMC3 and HTATIP2. Interacts with STAB1; this interaction may overcome SATB1-mediated repression of IL2 and IL2RA (interleukin) in T cells by binding to the same domain than HDAC1. Interacts (when acetylated) with human CDK13, thereby increasing HIV-1 mRNA splicing and promoting the production of the doubly spliced HIV-1 protein Nef. Interacts with host TBP; this interaction modulates the activity of transcriptional pre-initiation complex. Interacts with host RELA. Interacts with host PLSCR1; this interaction negatively regulates Tat transactivation activity by altering its subcellular distribution. Asymmetrical arginine methylation by host PRMT6 seems to diminish the transactivation capacity of Tat and affects the interaction with host CCNT1. Post-translationally, acetylation by EP300, CREBBP, GCN5L2/GCN5 and PCAF regulates the transactivation activity of Tat. EP300-mediated acetylation of Lys-50 promotes dissociation of Tat from the TAR RNA through the competitive binding to PCAF's bromodomain. In addition, the non-acetylated Tat's N-terminus can also interact with PCAF. PCAF-mediated acetylation of Lys-28 enhances Tat's binding to CCNT1. Lys-50 is deacetylated by SIRT1. In terms of processing, polyubiquitination by host MDM2 does not target Tat to degradation, but activates its transactivation function and fosters interaction with CCNT1 and TAR RNA. Phosphorylated by EIF2AK2 on serine and threonine residues adjacent to the basic region important for TAR RNA binding and function. Phosphorylation of Tat by EIF2AK2 is dependent on the prior activation of EIF2AK2 by dsRNA.

It is found in the host nucleus. The protein localises to the host nucleolus. Its subcellular location is the host cytoplasm. The protein resides in the secreted. In terms of biological role, transcriptional activator that increases RNA Pol II processivity, thereby increasing the level of full-length viral transcripts. Recognizes a hairpin structure at the 5'-LTR of the nascent viral mRNAs referred to as the transactivation responsive RNA element (TAR) and recruits the cyclin T1-CDK9 complex (P-TEFb complex) that will in turn hyperphosphorylate the RNA polymerase II to allow efficient elongation. The CDK9 component of P-TEFb and other Tat-activated kinases hyperphosphorylate the C-terminus of RNA Pol II that becomes stabilized and much more processive. Other factors such as HTATSF1/Tat-SF1, SUPT5H/SPT5, and HTATIP2 are also important for Tat's function. Besides its effect on RNA Pol II processivity, Tat induces chromatin remodeling of proviral genes by recruiting the histone acetyltransferases (HATs) CREBBP, EP300 and PCAF to the chromatin. This also contributes to the increase in proviral transcription rate, especially when the provirus integrates in transcriptionally silent region of the host genome. To ensure maximal activation of the LTR, Tat mediates nuclear translocation of NF-kappa-B by interacting with host RELA. Through its interaction with host TBP, Tat may also modulate transcription initiation. Tat can reactivate a latently infected cell by penetrating in it and transactivating its LTR promoter. In the cytoplasm, Tat is thought to act as a translational activator of HIV-1 mRNAs. Functionally, extracellular circulating Tat can be endocytosed by surrounding uninfected cells via the binding to several surface receptors such as CD26, CXCR4, heparan sulfate proteoglycans (HSPG) or LDLR. Neurons are rarely infected, but they internalize Tat via their LDLR. Through its interaction with nuclear HATs, Tat is potentially able to control the acetylation-dependent cellular gene expression. Modulates the expression of many cellular genes involved in cell survival, proliferation or in coding for cytokines or cytokine receptors. Tat plays a role in T-cell and neurons apoptosis. Tat induced neurotoxicity and apoptosis probably contribute to neuroAIDS. Circulating Tat also acts as a chemokine-like and/or growth factor-like molecule that binds to specific receptors on the surface of the cells, affecting many cellular pathways. In the vascular system, Tat binds to ITGAV/ITGB3 and ITGA5/ITGB1 integrins dimers at the surface of endothelial cells and competes with bFGF for heparin-binding sites, leading to an excess of soluble bFGF. This is Protein Tat from Homo sapiens (Human).